Consider the following 156-residue polypeptide: Small ribosomal subunit protein uS7 (156 aa).

Belongs to the universal ribosomal protein uS7 family. In terms of assembly, part of the 30S ribosomal subunit. Contacts proteins S9 and S11.

In terms of biological role, one of the primary rRNA binding proteins, it binds directly to 16S rRNA where it nucleates assembly of the head domain of the 30S subunit. Is located at the subunit interface close to the decoding center, probably blocks exit of the E-site tRNA. In Brevibacillus brevis (strain 47 / JCM 6285 / NBRC 100599), this protein is Small ribosomal subunit protein uS7.